The sequence spans 92 residues: uncharacterized protein (92 aa).

The segment covering 1-10 (MGLLKKKDST) has biased composition (basic and acidic residues). A disordered region spans residues 1-21 (MGLLKKKDSTSARSSTSPCAD). In terms of domain architecture, CHCH spans 16-66 (TSPCADLRNAYHNCFNKWYSEKFVKGQWDKEECVAEWKKYRDCLSENLDGK). 2 consecutive short sequence motifs (cx9C motif) follow at residues 19-29 (CADLRNAYHNC) and 48-58 (CVAEWKKYRDC). 2 disulfides stabilise this stretch: cysteine 19–cysteine 58 and cysteine 29–cysteine 48.

This sequence belongs to the TRIAP1/MDM35 family.

This is an uncharacterized protein from Arabidopsis thaliana (Mouse-ear cress).